A 335-amino-acid polypeptide reads, in one-letter code: Tryptophan--tRNA ligase (335 aa).

ATP contacts are provided by residues 9–11 (QST) and 17–18 (GN). Positions 10–18 (STNSLTLGN) match the 'HIGH' region motif. L-tryptophan is bound at residue aspartate 137. ATP contacts are provided by residues 149–151 (GKD), isoleucine 189, and 198–202 (KMSKS). Positions 198–202 (KMSKS) match the 'KMSKS' region motif.

Belongs to the class-I aminoacyl-tRNA synthetase family. In terms of assembly, homodimer.

The protein resides in the cytoplasm. It catalyses the reaction tRNA(Trp) + L-tryptophan + ATP = L-tryptophyl-tRNA(Trp) + AMP + diphosphate + H(+). Functionally, catalyzes the attachment of tryptophan to tRNA(Trp). This is Tryptophan--tRNA ligase from Malacoplasma penetrans (strain HF-2) (Mycoplasma penetrans).